The chain runs to 239 residues: Transcription factor MYB10 (239 aa).

HTH myb-type domains follow at residues 11-63 (KSQV…INYL) and 64-118 (RPGL…KKRL). DNA-binding regions (H-T-H motif) lie at residues 39–63 (WRSLPKLAGLMRCGKSCRLRWINYL) and 91–114 (WSKIASNFPGRTDNEIKNVWNTHL).

As to expression, expressed in cauline leaves and siliques.

Its subcellular location is the nucleus. Its function is as follows. Involved in metal ions homeostasis, including iron ions (Fe) acquisition, via the regulation of NAS4 and NAS2 genes expression. Necessary for plant survival in alkaline soil where iron availability is greatly restricted. Triggers tolerance to nickel (Ni) and zinc (Zn) ions. This Arabidopsis thaliana (Mouse-ear cress) protein is Transcription factor MYB10.